Consider the following 379-residue polypeptide: 1-deoxy-D-xylulose 5-phosphate reductoisomerase (379 aa).

7 residues coordinate NADPH: Thr-10, Gly-11, Ser-12, Ile-13, Arg-38, Asn-39, and Asn-121. 1-deoxy-D-xylulose 5-phosphate is bound at residue Lys-122. Glu-123 serves as a coordination point for NADPH. Asp-147 lines the Mn(2+) pocket. The 1-deoxy-D-xylulose 5-phosphate site is built by Ser-148, Glu-149, Ser-173, and His-196. Residue Glu-149 coordinates Mn(2+). Residue Gly-202 coordinates NADPH. Positions 209, 214, 215, and 218 each coordinate 1-deoxy-D-xylulose 5-phosphate. Mn(2+) is bound at residue Glu-218.

This sequence belongs to the DXR family. Mg(2+) serves as cofactor. Requires Mn(2+) as cofactor.

The enzyme catalyses 2-C-methyl-D-erythritol 4-phosphate + NADP(+) = 1-deoxy-D-xylulose 5-phosphate + NADPH + H(+). The protein operates within isoprenoid biosynthesis; isopentenyl diphosphate biosynthesis via DXP pathway; isopentenyl diphosphate from 1-deoxy-D-xylulose 5-phosphate: step 1/6. In terms of biological role, catalyzes the NADPH-dependent rearrangement and reduction of 1-deoxy-D-xylulose-5-phosphate (DXP) to 2-C-methyl-D-erythritol 4-phosphate (MEP). The chain is 1-deoxy-D-xylulose 5-phosphate reductoisomerase from Chlamydia trachomatis serovar L2 (strain ATCC VR-902B / DSM 19102 / 434/Bu).